Here is a 323-residue protein sequence, read N- to C-terminus: MTIAIVIGTHGWAAEQLLKTAEMLLGEQENVGWIDFVPGENAETLIEKYNAQLAKLDTTKGVLFLVDTWGGSPFNAASRIVVDKEHYEVIAGVNIPMLVETLMARDDDPSFDELVALAVETGREGVKALKAKPVEKAAPAPAAAAPKAAPTPAKPMGPNDYMVIGLARIDDRLIHGQVATRWTKETNVSRIIVVSDEVAADTVRKTLLTQVAPPGVTAHVVDVAKMIRVYNNPKYAGERVMLLFTNPTDVERLVEGGVKITSVNVGGMAFRQGKTQVNNAVSVDEKDIEAFKKLNARGIELEVRKVSTDPKLKMMDLISKIDK.

Positions 2–124 (TIAIVIGTHG…VALAVETGRE (123 aa)) constitute a PTS EIIA type-4 domain. H10 functions as the Tele-phosphohistidine intermediate; for EIIA activity in the catalytic mechanism. Residue H10 is modified to Phosphohistidine; by HPr. K55 carries the post-translational modification N6-acetyllysine. The tract at residues 137–155 (AAPAPAAAAPKAAPTPAKP) is hinge. In terms of domain architecture, PTS EIIB type-4 spans 157-320 (GPNDYMVIGL…KLKMMDLISK (164 aa)). The active-site Pros-phosphohistidine intermediate; for EIIB activity is the H175. At H175 the chain carries Phosphohistidine; by EIIA. N6-acetyllysine is present on K234.

In terms of assembly, homodimer.

The protein resides in the cytoplasm. The protein localises to the cell inner membrane. It catalyses the reaction D-mannose(out) + N(pros)-phospho-L-histidyl-[protein] = D-mannose 6-phosphate(in) + L-histidyl-[protein]. Functionally, the phosphoenolpyruvate-dependent sugar phosphotransferase system (sugar PTS), a major carbohydrate active transport system, catalyzes the phosphorylation of incoming sugar substrates concomitantly with their translocation across the cell membrane. The enzyme II ManXYZ PTS system is involved in mannose transport. This Escherichia coli O157:H7 protein is PTS system mannose-specific EIIAB component (manX).